The following is a 307-amino-acid chain: D-alanine--D-alanine ligase (307 aa).

The 201-residue stretch at 101-301 folds into the ATP-grasp domain; sequence KTVMRAAGVS…FGELVRWMVE (201 aa). 127 to 182 is an ATP binding site; it reads PLTPPYVVKPIAEGSSMGVIIVRDERSHPPQILASDEWVYGEEVLAETYVAGRELT. Positions 251, 268, and 270 each coordinate Mg(2+).

It belongs to the D-alanine--D-alanine ligase family. It depends on Mg(2+) as a cofactor. The cofactor is Mn(2+).

Its subcellular location is the cytoplasm. It catalyses the reaction 2 D-alanine + ATP = D-alanyl-D-alanine + ADP + phosphate + H(+). Its pathway is cell wall biogenesis; peptidoglycan biosynthesis. Its function is as follows. Cell wall formation. The sequence is that of D-alanine--D-alanine ligase from Methylorubrum extorquens (strain CM4 / NCIMB 13688) (Methylobacterium extorquens).